The sequence spans 156 residues: ATP synthase subunit b (156 aa).

The helical transmembrane segment at 11-31 (AIAFILFVWFCMKYVWPPLMA) threads the bilayer.

Belongs to the ATPase B chain family. F-type ATPases have 2 components, F(1) - the catalytic core - and F(0) - the membrane proton channel. F(1) has five subunits: alpha(3), beta(3), gamma(1), delta(1), epsilon(1). F(0) has three main subunits: a(1), b(2) and c(10-14). The alpha and beta chains form an alternating ring which encloses part of the gamma chain. F(1) is attached to F(0) by a central stalk formed by the gamma and epsilon chains, while a peripheral stalk is formed by the delta and b chains.

Its subcellular location is the cell inner membrane. Functionally, f(1)F(0) ATP synthase produces ATP from ADP in the presence of a proton or sodium gradient. F-type ATPases consist of two structural domains, F(1) containing the extramembraneous catalytic core and F(0) containing the membrane proton channel, linked together by a central stalk and a peripheral stalk. During catalysis, ATP synthesis in the catalytic domain of F(1) is coupled via a rotary mechanism of the central stalk subunits to proton translocation. Component of the F(0) channel, it forms part of the peripheral stalk, linking F(1) to F(0). The chain is ATP synthase subunit b from Salmonella gallinarum (strain 287/91 / NCTC 13346).